Consider the following 487-residue polypeptide: MSVQFTATALARAVTAGETTPQALLDQAVARAEAASTLNALVSLNEQAGAQAAEVSRRLAGGEALPLAGVPVIVKDNINVSGTRTTCGSRILATYVSPYTATAAQRLIDAGAVIVGKANMDEFAMGSSTESSASGPTLNPWDLSRVPGGSSGGSAVAVAANLTPVSLGSDTGGSVRQPAALTGVYGLKPTYGRVSRYGLVAYASSLDQIGPFARSAADLALLMNVVAGHDPRDATSLEAPARFQAGAPEDLKGLRVGVIRESLGGNTSAVDAALNTTLEALRAGGATTGEVSIPDLSHAIAAYYLIAMPEASSNLARYDGMVYGQRAPGSDVSEVMTLTREHGFGREVQRRIMIGTYALSSGYYDAYYSKAMKVRRLIAQEFSRAFQEYDVLVTPTSPFPAFRRGEKTSDPLAMYAADVDTVAVNLAGLPAISIPAGFDLAEGGVRLPVGVQFIAPALKDELLVQLAGALEGIGAVQLDSPAGYAAP.

Active-site charge relay system residues include lysine 75 and serine 150. Serine 174 acts as the Acyl-ester intermediate in catalysis.

The protein belongs to the amidase family. GatA subfamily. As to quaternary structure, heterotrimer of A, B and C subunits.

The catalysed reaction is L-glutamyl-tRNA(Gln) + L-glutamine + ATP + H2O = L-glutaminyl-tRNA(Gln) + L-glutamate + ADP + phosphate + H(+). Its function is as follows. Allows the formation of correctly charged Gln-tRNA(Gln) through the transamidation of misacylated Glu-tRNA(Gln) in organisms which lack glutaminyl-tRNA synthetase. The reaction takes place in the presence of glutamine and ATP through an activated gamma-phospho-Glu-tRNA(Gln). The polypeptide is Glutamyl-tRNA(Gln) amidotransferase subunit A (Deinococcus deserti (strain DSM 17065 / CIP 109153 / LMG 22923 / VCD115)).